Consider the following 748-residue polypeptide: CCR4-NOT transcription complex subunit 10-B (748 aa).

Residues 1-16 (MAADKAGEQGAEKHEG) show a composition bias toward basic and acidic residues. Disordered regions lie at residues 1–25 (MAAD…GISD), 483–524 (KQEN…PPSS), and 605–634 (VSLG…KQIP). Polar residues-rich tracts occupy residues 487-509 (GSKA…VCSN) and 605-615 (VSLGVSSNEQE).

This sequence belongs to the CNOT10 family. In terms of assembly, component of the CCR4-NOT complex. cnot10 and cnot11 form a subcomplex docked to the cnot1 scaffold.

It localises to the cytoplasm. The protein resides in the nucleus. In terms of biological role, component of the CCR4-NOT complex which is one of the major cellular mRNA deadenylases and is linked to various cellular processes including bulk mRNA degradation, miRNA-mediated repression, translational repression during translational initiation and general transcription regulation. Additional complex functions may be a consequence of its influence on mRNA expression. Is not required for association of CNOT7 to the CCR4-NOT complex. The chain is CCR4-NOT transcription complex subunit 10-B (cnot10-b) from Xenopus laevis (African clawed frog).